The primary structure comprises 407 residues: Divalent metal cation transporter MntH (407 aa).

11 helical membrane-spanning segments follow: residues 16–36, 43–63, 95–115, 119–139, 152–172, 193–213, 239–259, 288–308, 318–338, 346–366, and 387–407; these read LTLLGPAFIAAIGYIDPGNFA, STFGYQLLWVVVWANLMAMLV, WVQAEIIAMATDLAEFIGAAV, LLLGVTLLEGAGITAVVTWGI, FVVGGLLLFVAAAYIVELVFS, AVYLAAGVLGATVMPHVIYLH, IAMTIAGFVNLAMMAMAAAAF, LFGLSLVASGISSTVVGTLAG, FTIPLWLRRAITMAPAFVVIA, ILVLSQVVLSFGIALALIPLL, and VGRLIVALVIGLNAYLLVAMI.

It belongs to the NRAMP family.

The protein resides in the cell inner membrane. Functionally, h(+)-stimulated, divalent metal cation uptake system. The chain is Divalent metal cation transporter MntH from Aeromonas hydrophila subsp. hydrophila (strain ATCC 7966 / DSM 30187 / BCRC 13018 / CCUG 14551 / JCM 1027 / KCTC 2358 / NCIMB 9240 / NCTC 8049).